The chain runs to 466 residues: Asparagine--tRNA ligase (466 aa).

It belongs to the class-II aminoacyl-tRNA synthetase family. Homodimer.

The protein localises to the cytoplasm. The catalysed reaction is tRNA(Asn) + L-asparagine + ATP = L-asparaginyl-tRNA(Asn) + AMP + diphosphate + H(+). The polypeptide is Asparagine--tRNA ligase (Myxococcus xanthus (strain DK1622)).